A 467-amino-acid chain; its full sequence is Glutamate--tRNA ligase (467 aa).

A 'HIGH' region motif is present at residues 9 to 19; sequence PSPTGFLHIGG. The short motif at 250–254 is the 'KMSKS' region element; sequence KLSKR. K253 contacts ATP.

This sequence belongs to the class-I aminoacyl-tRNA synthetase family. Glutamate--tRNA ligase type 1 subfamily. In terms of assembly, monomer.

Its subcellular location is the cytoplasm. It carries out the reaction tRNA(Glu) + L-glutamate + ATP = L-glutamyl-tRNA(Glu) + AMP + diphosphate. Functionally, catalyzes the attachment of glutamate to tRNA(Glu) in a two-step reaction: glutamate is first activated by ATP to form Glu-AMP and then transferred to the acceptor end of tRNA(Glu). This Mesomycoplasma hyopneumoniae (strain 7448) (Mycoplasma hyopneumoniae) protein is Glutamate--tRNA ligase.